The primary structure comprises 315 residues: Protein sprouty homolog 2 (315 aa).

Polar residues predominate over residues 1 to 14 (MEARAQSGSGSQPL). Disordered regions lie at residues 1–38 (MEARAQSGSGSQPLLQAPRDSGRQRGEPDPRDALPQQV) and 51–140 (NTNE…GSSF). Residues 20 to 32 (DSGRQRGEPDPRD) are compositionally biased toward basic and acidic residues. Over residues 88 to 100 (PRQPSRPQHPPAH) the composition is skewed to pro residues. Residues 109-140 (RSISTVSSGSRSSTRTSTSSSSSEQRLLGSSF) show a composition bias toward low complexity. The tract at residues 118–315 (SRSSTRTSTS…VPPRNFEKPT (198 aa)) is required for interaction with CAV1. The region spanning 177–291 (KCEDCGKCKC…CYDRVNRPGC (115 aa)) is the SPR domain. Residues 178–315 (CEDCGKCKCK…VPPRNFEKPT (138 aa)) form a required for interaction with TESK1 region.

Belongs to the sprouty family. As to quaternary structure, forms heterodimers with SPRY1. Forms a tripartite complex containing GAB1, METTL13 and SPRY2. Within the complex interacts with METTL13. Interacts with RAF1. Interacts (via C-terminus) with TESK1 (via C-terminus); the interaction disrupts SPRY2 interaction with GRB2, potentially via disruption of SPRY2 serine dephosphorylation. Interacts with PPP2R1A/PP2A-A and PPP2CA/PP2A-C; the interaction with PPP2CA/PP2A-C is inhibited by interaction with TESK1, possibly by vesicular sequestration of SPRY2. Inhibition of the interaction with the serine/threonine-protein phosphatase 2A (PP2A) holoenzyme results in loss of PP2A-mediated dephosphorylation, resulting in the loss of SPRY2 interaction with GRB2. Interacts with GRB2. Interacts with CBL/C-CBL; the interaction inhibits CBL-mediated ubiquitination of EGFR. Interacts (via C-terminus) with CAV1 (via C-terminus). Post-translationally, cleaved at Pro-144 by the prolyl endopeptidase FAP (seprase) activity (in vitro).

Its subcellular location is the cytoplasm. It localises to the cytoskeleton. The protein resides in the cell projection. It is found in the ruffle membrane. Antagonist of fibroblast growth factor (FGF) pathways via inhibition of FGF-mediated phosphorylation of ERK1/2. Thereby acts as an antagonist of FGF-induced retinal lens fiber differentiation, may inhibit limb bud outgrowth and may negatively modulate respiratory organogenesis. Inhibits TGFB-induced epithelial-to-mesenchymal transition in retinal lens epithelial cells. Inhibits CBL/C-CBL-mediated EGFR ubiquitination. In Bos taurus (Bovine), this protein is Protein sprouty homolog 2 (SPRY2).